A 210-amino-acid polypeptide reads, in one-letter code: MNSLIMVIIALIAAYFIGSTPAPYLAGRIFKKIDIRTVGSKNMGSMNVFYNVGFWPGILVLTTDIGKGALAMAVANWLGEGLGIQMLCALMAIAGHNYPVWLKFKGGKGGATAIGILAYMMPEGIPIYIACFLILMAITRFPTLSYGISFISFILVAWLGQHDMGKVLFSLLVVMIPILMYIPRMKEIKNKAGSGNAKRAIFRRNLKERL.

The next 6 membrane-spanning stretches (helical) occupy residues 4 to 24, 52 to 72, 73 to 93, 114 to 134, 141 to 161, and 163 to 183; these read LIMV…PAPY, VGFW…ALAM, AVAN…LMAI, IGIL…CFLI, FPTL…WLGQ, and DMGK…MYIP.

The protein belongs to the PlsY family. As to quaternary structure, probably interacts with PlsX.

It is found in the cell membrane. The catalysed reaction is an acyl phosphate + sn-glycerol 3-phosphate = a 1-acyl-sn-glycero-3-phosphate + phosphate. It functions in the pathway lipid metabolism; phospholipid metabolism. Functionally, catalyzes the transfer of an acyl group from acyl-phosphate (acyl-PO(4)) to glycerol-3-phosphate (G3P) to form lysophosphatidic acid (LPA). This enzyme utilizes acyl-phosphate as fatty acyl donor, but not acyl-CoA or acyl-ACP. This is Glycerol-3-phosphate acyltransferase 2 from Dehalococcoides mccartyi (strain CBDB1).